The primary structure comprises 321 residues: Nod factor export ATP-binding protein I (321 aa).

The 231-residue stretch at 17–247 folds into the ABC transporter domain; it reads LSVEGLRKRY…EIGCDVVEVY (231 aa). 49-56 serves as a coordination point for ATP; it reads GPNGAGKT.

The protein belongs to the ABC transporter superfamily. Lipooligosaccharide exporter (TC 3.A.1.102) family. The complex is composed of two ATP-binding proteins (NodI) and two transmembrane proteins (NodJ).

The protein localises to the cell inner membrane. Its function is as follows. Part of the ABC transporter complex NodIJ involved in the export of the nodulation factors (Nod factors), the bacterial signal molecules that induce symbiosis and subsequent nodulation induction. Nod factors are LCO (lipo-chitin oligosaccharide), a modified beta-1,4-linked N-acetylglucosamine oligosaccharide. This subunit is responsible for energy coupling to the transport system. The protein is Nod factor export ATP-binding protein I of Ralstonia nicotianae (strain ATCC BAA-1114 / GMI1000) (Ralstonia solanacearum).